A 294-amino-acid chain; its full sequence is Cytidine deaminase (294 aa).

CMP/dCMP-type deaminase domains follow at residues 48-168 (DEDA…FGPK) and 186-294 (LTGD…VLLG). 89 to 91 (NME) serves as a coordination point for substrate. Residue histidine 102 participates in Zn(2+) binding. The Proton donor role is filled by glutamate 104. Positions 129 and 132 each coordinate Zn(2+).

It belongs to the cytidine and deoxycytidylate deaminase family. Homodimer. Requires Zn(2+) as cofactor.

The catalysed reaction is cytidine + H2O + H(+) = uridine + NH4(+). It carries out the reaction 2'-deoxycytidine + H2O + H(+) = 2'-deoxyuridine + NH4(+). Its function is as follows. This enzyme scavenges exogenous and endogenous cytidine and 2'-deoxycytidine for UMP synthesis. In Salmonella choleraesuis (strain SC-B67), this protein is Cytidine deaminase.